The chain runs to 501 residues: NAD(P)H-quinone oxidoreductase subunit 2, chloroplastic (501 aa).

14 consecutive transmembrane segments (helical) span residues 15–35 (ILPE…DLIL), 42–62 (VFFF…IFQL), 82–102 (IFRI…IDFI), 107–127 (LAIT…MFLC), 132–152 (LITI…LSGY), 167–187 (LLIG…LYGL), 210–230 (FGSL…LSLV), 244–264 (PTPV…ALLV), 278–298 (WHSL…LVAI), 307–327 (LAYS…TGNF), 334–354 (IVYL…IILF), 378–398 (FSLA…GFFG), 410–430 (GLYF…YYYL), and 466–486 (VSII…NPII).

Belongs to the complex I subunit 2 family. NDH is composed of at least 16 different subunits, 5 of which are encoded in the nucleus.

The protein localises to the plastid. It localises to the chloroplast thylakoid membrane. The enzyme catalyses a plastoquinone + NADH + (n+1) H(+)(in) = a plastoquinol + NAD(+) + n H(+)(out). It carries out the reaction a plastoquinone + NADPH + (n+1) H(+)(in) = a plastoquinol + NADP(+) + n H(+)(out). Its function is as follows. NDH shuttles electrons from NAD(P)H:plastoquinone, via FMN and iron-sulfur (Fe-S) centers, to quinones in the photosynthetic chain and possibly in a chloroplast respiratory chain. The immediate electron acceptor for the enzyme in this species is believed to be plastoquinone. Couples the redox reaction to proton translocation, and thus conserves the redox energy in a proton gradient. In Physcomitrium patens (Spreading-leaved earth moss), this protein is NAD(P)H-quinone oxidoreductase subunit 2, chloroplastic.